A 375-amino-acid chain; its full sequence is Arsenite methyltransferase (375 aa).

Position 335 is a phosphoserine (serine 335).

This sequence belongs to the methyltransferase superfamily. Arsenite methyltransferase family.

Its subcellular location is the cytoplasm. It is found in the cytosol. The enzyme catalyses arsenic triglutathione + [thioredoxin]-dithiol + S-adenosyl-L-methionine + 2 H2O = methylarsonous acid + [thioredoxin]-disulfide + 3 glutathione + S-adenosyl-L-homocysteine + H(+). The catalysed reaction is arsenic triglutathione + 2 [thioredoxin]-dithiol + 2 S-adenosyl-L-methionine + H2O = dimethylarsinous acid + 2 [thioredoxin]-disulfide + 3 glutathione + 2 S-adenosyl-L-homocysteine + 2 H(+). It catalyses the reaction arsenic triglutathione + 3 [thioredoxin]-dithiol + 3 S-adenosyl-L-methionine = trimethylarsine + 3 [thioredoxin]-disulfide + 3 glutathione + 3 S-adenosyl-L-homocysteine + 3 H(+). Catalyzes the transfer of a methyl group from AdoMet to trivalent arsenicals producing methylated and dimethylated arsenicals. It methylates arsenite to form methylarsonate, Me-AsO(3)H(2), which is reduced by methylarsonate reductase to methylarsonite, Me-As(OH)2. Methylarsonite is also a substrate and it is converted into the much less toxic compound dimethylarsinate (cacodylate), Me(2)As(O)-OH. In Homo sapiens (Human), this protein is Arsenite methyltransferase (AS3MT).